We begin with the raw amino-acid sequence, 294 residues long: Ribosomal RNA small subunit methyltransferase A (294 aa).

6 residues coordinate S-adenosyl-L-methionine: Asn-29, Val-31, Gly-56, Glu-77, Asp-107, and Asn-126.

This sequence belongs to the class I-like SAM-binding methyltransferase superfamily. rRNA adenine N(6)-methyltransferase family. RsmA subfamily.

It is found in the cytoplasm. It catalyses the reaction adenosine(1518)/adenosine(1519) in 16S rRNA + 4 S-adenosyl-L-methionine = N(6)-dimethyladenosine(1518)/N(6)-dimethyladenosine(1519) in 16S rRNA + 4 S-adenosyl-L-homocysteine + 4 H(+). Specifically dimethylates two adjacent adenosines (A1518 and A1519) in the loop of a conserved hairpin near the 3'-end of 16S rRNA in the 30S particle. May play a critical role in biogenesis of 30S subunits. The sequence is that of Ribosomal RNA small subunit methyltransferase A from Mycobacterium sp. (strain JLS).